Consider the following 131-residue polypeptide: Phosphoribosyl-AMP cyclohydrolase (131 aa).

D89 provides a ligand contact to Mg(2+). Residue C90 participates in Zn(2+) binding. D91 and D93 together coordinate Mg(2+). Zn(2+) contacts are provided by C106 and C113.

Belongs to the PRA-CH family. Homodimer. The cofactor is Mg(2+). Zn(2+) is required as a cofactor.

Its subcellular location is the cytoplasm. The enzyme catalyses 1-(5-phospho-beta-D-ribosyl)-5'-AMP + H2O = 1-(5-phospho-beta-D-ribosyl)-5-[(5-phospho-beta-D-ribosylamino)methylideneamino]imidazole-4-carboxamide. It participates in amino-acid biosynthesis; L-histidine biosynthesis; L-histidine from 5-phospho-alpha-D-ribose 1-diphosphate: step 3/9. In terms of biological role, catalyzes the hydrolysis of the adenine ring of phosphoribosyl-AMP. The protein is Phosphoribosyl-AMP cyclohydrolase of Pyrobaculum aerophilum (strain ATCC 51768 / DSM 7523 / JCM 9630 / CIP 104966 / NBRC 100827 / IM2).